The following is a 78-amino-acid chain: Large ribosomal subunit protein uL29 (78 aa).

This sequence belongs to the universal ribosomal protein uL29 family.

The sequence is that of Large ribosomal subunit protein uL29 from Crocosphaera subtropica (strain ATCC 51142 / BH68) (Cyanothece sp. (strain ATCC 51142)).